A 350-amino-acid polypeptide reads, in one-letter code: S-adenosylmethionine:tRNA ribosyltransferase-isomerase (350 aa).

The protein belongs to the QueA family. In terms of assembly, monomer.

It is found in the cytoplasm. It catalyses the reaction 7-aminomethyl-7-carbaguanosine(34) in tRNA + S-adenosyl-L-methionine = epoxyqueuosine(34) in tRNA + adenine + L-methionine + 2 H(+). It functions in the pathway tRNA modification; tRNA-queuosine biosynthesis. In terms of biological role, transfers and isomerizes the ribose moiety from AdoMet to the 7-aminomethyl group of 7-deazaguanine (preQ1-tRNA) to give epoxyqueuosine (oQ-tRNA). The sequence is that of S-adenosylmethionine:tRNA ribosyltransferase-isomerase from Bacillus cereus (strain B4264).